A 464-amino-acid chain; its full sequence is MELFSLSSLLLLSTLFVFYIFKFVFKRRNQRNCYMLHYECYKGMEERKLDTETCAKVVQRNKNLGLEEYRFLLRTMASSGIGEETYGPRNVLEGREDSPTLLDAHSEMDEIMFDTLDKLFHKTKGSISPSDIDILVVNVSLFAPSPSLTSRVINRYKMREDIKSYNLSGLGCSASVISIDIVQRMFETRENALALVVSTETMGPHWYCGKDRSMMLSNCLFRAGGSSVLLTNAARFKNQALMKLVTVVRAHVGSDDEAYSCCIQMEDRDGHPGFLLTKYLKKAAARALTKNLQVLLPRVLPVKELIRYAIVRALKRRTSAKREPASSGIGLNLKTGLQHFCIHPGGRAIIEGVGKSLGLTEFDIEPARMALHRFGNTSSGGLWYVLGYMEAKNRLKKGEKILMMSMGAGFESNNCVWEVLKDLDDKNVWEDSVDRYPELSRIPNPFVEKYDWINDDTMSFVRVD.

A helical membrane pass occupies residues 3 to 25 (LFSLSSLLLLSTLFVFYIFKFVF). In terms of domain architecture, FAE spans 24 to 318 (VFKRRNQRNC…AIVRALKRRT (295 aa)). Catalysis depends on residues C172, H251, H339, H343, H372, and N376.

This sequence belongs to the thiolase-like superfamily. Chalcone/stilbene synthases family. As to expression, expressed in siliques.

Its subcellular location is the membrane. It carries out the reaction a very-long-chain acyl-CoA + malonyl-CoA + H(+) = a very-long-chain 3-oxoacyl-CoA + CO2 + CoA. The protein operates within lipid metabolism; fatty acid biosynthesis. The polypeptide is 3-ketoacyl-CoA synthase 19 (Arabidopsis thaliana (Mouse-ear cress)).